An 842-amino-acid polypeptide reads, in one-letter code: Alanine--tRNA ligase (842 aa).

Residues H549, H553, C650, and H654 each coordinate Zn(2+).

Belongs to the class-II aminoacyl-tRNA synthetase family. The cofactor is Zn(2+).

The protein resides in the cytoplasm. The catalysed reaction is tRNA(Ala) + L-alanine + ATP = L-alanyl-tRNA(Ala) + AMP + diphosphate. Functionally, catalyzes the attachment of alanine to tRNA(Ala) in a two-step reaction: alanine is first activated by ATP to form Ala-AMP and then transferred to the acceptor end of tRNA(Ala). Also edits incorrectly charged Ser-tRNA(Ala) and Gly-tRNA(Ala) via its editing domain. This is Alanine--tRNA ligase from Campylobacter jejuni subsp. jejuni serotype O:6 (strain 81116 / NCTC 11828).